A 396-amino-acid chain; its full sequence is Putative 2-hydroxyacid dehydrogenase YPL113C (396 aa).

Residues Ser227–Ile228, Val311–Arg313, and Asp337 each bind NAD(+). Arg313 is an active-site residue. Glu342 is an active-site residue. The active-site Proton donor is His361. Position 361–364 (His361–Ser364) interacts with NAD(+).

This sequence belongs to the D-isomer specific 2-hydroxyacid dehydrogenase family.

Putative 2-hydroxyacid dehydrogenase. The sequence is that of Putative 2-hydroxyacid dehydrogenase YPL113C from Saccharomyces cerevisiae (strain ATCC 204508 / S288c) (Baker's yeast).